Reading from the N-terminus, the 621-residue chain is Ubiquitin-like-specific protease 1 (621 aa).

Ser2 is subject to N-acetylserine. 2 positions are modified to phosphoserine: Ser21 and Ser25. Disordered stretches follow at residues 116 to 150 (FDGS…ENYS) and 169 to 196 (RRRI…SNCD). A compositionally biased stretch (low complexity) spans 124–141 (SGNSDVESRSSGSRSSDV). Position 179 is a phosphothreonine (Thr179). The span at 179-196 (TPSTSPISSLASQKSNCD) shows a compositional bias: polar residues. Ser264 bears the Phosphoserine mark. The interval 432 to 621 (NIEITVRDFK…AHLILTDALK (190 aa)) is protease. Catalysis depends on residues His514, Asp531, and Cys580.

Belongs to the peptidase C48 family.

The catalysed reaction is Hydrolysis of the alpha-linked peptide bond in the sequence Gly-Gly-|-Ala-Thr-Tyr at the C-terminal end of the small ubiquitin-like modifier (SUMO) propeptide, Smt3, leading to the mature form of the protein. A second reaction involves the cleavage of an epsilon-linked peptide bond between the C-terminal glycine of the mature SUMO and the lysine epsilon-amino group of the target protein.. In terms of biological role, protease that catalyzes two essential functions in the SUMO pathway: processing of full-length SMT3 to its mature form and deconjugation of SMT3 from targeted proteins. Has an essential role in the G2/M phase of the cell cycle. The protein is Ubiquitin-like-specific protease 1 (ULP1) of Saccharomyces cerevisiae (strain ATCC 204508 / S288c) (Baker's yeast).